Reading from the N-terminus, the 883-residue chain is Envelope glycoprotein B (883 aa).

The N-terminal stretch at 1–31 (MQSYIAVNIDMASLKMLICVCVAILIPSTLS) is a signal peptide. The Virion surface segment spans residues 32–750 (QDSHGIGWNN…SGIASFLSNP (719 aa)). 5 disulfides stabilise this stretch: Cys-77–Cys-535, Cys-94–Cys-491, Cys-167–Cys-229, Cys-321–Cys-369, and Cys-558–Cys-608. 2 N-linked (GlcNAc...) asparagine; by host glycosylation sites follow: Asn-102 and Asn-121. The tract at residues 134–140 (TWALFSR) is involved in fusion and/or binding to host membrane. The N-linked (GlcNAc...) asparagine; by host glycan is linked to Asn-211. Residues 216 to 223 (HQTLGYRT) are involved in fusion and/or binding to host membrane. Residues Asn-262 and Asn-360 are each glycosylated (N-linked (GlcNAc...) asparagine; by host). The tract at residues 428-457 (QNHLPRGRERRQAAGRRTASLQSGPQGDRI) is disordered. N-linked (GlcNAc...) asparagine; by host glycosylation is found at Asn-579, Asn-635, and Asn-649. Hydrophobic membrane proximal region regions lie at residues 694–748 (IDTV…SFLS) and 724–744 (ALGT…SGIA). A helical transmembrane segment spans residues 751–771 (FAALAIGIAVVVSIILGLLAF). Residues 772-883 (KYVMNLKSNP…PSWAEESEDE (112 aa)) lie on the Intravirion side of the membrane. A disordered region spans residues 791-817 (PPAGTPPRPSRRYYKDEEEVEEDSDED). Positions 806–817 (DEEEVEEDSDED) are enriched in acidic residues. Positions 868–871 (YPLL) match the Internalization motif motif.

The protein belongs to the herpesviridae glycoprotein B family. As to quaternary structure, homotrimer; disulfide-linked. Binds to heparan sulfate proteoglycans. Interacts with gH/gL heterodimer. In terms of processing, a proteolytic cleavage by host furin generates two subunits that remain linked by disulfide bonds.

The protein resides in the virion membrane. It is found in the host cell membrane. Its subcellular location is the host endosome membrane. It localises to the host Golgi apparatus membrane. In terms of biological role, envelope glycoprotein that forms spikes at the surface of virion envelope. Essential for the initial attachment to heparan sulfate moieties of the host cell surface proteoglycans. Involved in fusion of viral and cellular membranes leading to virus entry into the host cell. Following initial binding to its host receptors, membrane fusion is mediated by the fusion machinery composed at least of gB and the heterodimer gH/gL. May be involved in the fusion between the virion envelope and the outer nuclear membrane during virion egress. The polypeptide is Envelope glycoprotein B (Infectious laryngotracheitis virus (strain SA-2) (ILTV)).